Consider the following 415-residue polypeptide: Nacrein-like protein C2 (415 aa).

Asn-27 carries N-linked (GlcNAc...) asparagine glycosylation. In terms of domain architecture, Alpha-carbonic anhydrase spans 33-414 (AGFSYDRSIC…KNKVTVYKSF (382 aa)). Zn(2+) contacts are provided by His-132, His-134, and His-157. The segment at 201 to 297 (DEPDDEECKH…GENGHKHGCR (97 aa)) is disordered. Residues 207–219 (ECKHILKGHHPDN) show a composition bias toward basic and acidic residues. Low complexity predominate over residues 220–289 (NENGNGDNGN…NNGENGNNGE (70 aa)). A run of 22 repeats spans residues 225–227 (GDN), 228–230 (GNN), 231–233 (GYN), 234–236 (GDN), 237–239 (GNN), 240–242 (GDN), 243–245 (GNN), 246–248 (GYN), 249–251 (GDN), 252–254 (GNN), 255–257 (GVN), 258–260 (GNN), 261–263 (GYN), 264–266 (GDN), 267–269 (GNN), 270–272 (GDN), 273–275 (GNN), 276–278 (GEN), 279–281 (GNN), 282–284 (GEN), 285–286 (GN), and 288–290 (GEN). The tract at residues 225 to 290 (GDNGNNGYNG…NGENGNNGEN (66 aa)) is 27 X 3 AA approximate tandem repeats of G-X-N. 355 to 356 (TT) serves as a coordination point for substrate.

The protein belongs to the alpha-carbonic anhydrase family. In terms of assembly, homooligomer; disulfide-linked. May also be disulfide-linked to insoluble organic matrix. It depends on Zn(2+) as a cofactor. In terms of tissue distribution, expressed in the mantle.

It localises to the secreted. Its subcellular location is the extracellular space. The protein localises to the extracellular matrix. It carries out the reaction hydrogencarbonate + H(+) = CO2 + H2O. Its function is as follows. Acts as a negative regulator for calcification in the shells of mollusks. May function both as a calcium concentrator and as a carbonic anhydrase required for production of carbonate ions, which are assembled to CaCO(3) at mineralization sites. Is important for shell formation in both the calcitic prismatic layer and the aragonitic nacreous layer. Shows inhibitory activity of crystal formation when present in free state but, when attached to the insoluble matrix, may regulate the form and size of aragonite crystal. This Crassostrea nippona (Iwagaki oyster) protein is Nacrein-like protein C2.